A 518-amino-acid polypeptide reads, in one-letter code: GMP synthase [glutamine-hydrolyzing] (518 aa).

Residues 13-203 form the Glutamine amidotransferase type-1 domain; the sequence is KIIVLDFGSQ…ALNVCGCKGD (191 aa). The active-site Nucleophile is C90. Residues H177 and E179 contribute to the active site. The GMPS ATP-PPase domain maps to 204–393; it reads WTMENFSEVE…LGMPDAIVWR (190 aa). 231–237 is an ATP binding site; that stretch reads SGGVDSS.

In terms of assembly, homodimer.

The catalysed reaction is XMP + L-glutamine + ATP + H2O = GMP + L-glutamate + AMP + diphosphate + 2 H(+). It participates in purine metabolism; GMP biosynthesis; GMP from XMP (L-Gln route): step 1/1. In terms of biological role, catalyzes the synthesis of GMP from XMP. The protein is GMP synthase [glutamine-hydrolyzing] of Listeria welshimeri serovar 6b (strain ATCC 35897 / DSM 20650 / CCUG 15529 / CIP 8149 / NCTC 11857 / SLCC 5334 / V8).